Here is a 258-residue protein sequence, read N- to C-terminus: Ubiquinone/menaquinone biosynthesis C-methyltransferase UbiE (258 aa).

Residues 1 to 21 (MPESRTSADGGMETSYGFREV) form a disordered region. S-adenosyl-L-methionine is bound by residues Thr-81, Asp-102, and 130-131 (NA).

The protein belongs to the class I-like SAM-binding methyltransferase superfamily. MenG/UbiE family.

The catalysed reaction is a 2-demethylmenaquinol + S-adenosyl-L-methionine = a menaquinol + S-adenosyl-L-homocysteine + H(+). It catalyses the reaction a 2-methoxy-6-(all-trans-polyprenyl)benzene-1,4-diol + S-adenosyl-L-methionine = a 5-methoxy-2-methyl-3-(all-trans-polyprenyl)benzene-1,4-diol + S-adenosyl-L-homocysteine + H(+). Its pathway is quinol/quinone metabolism; menaquinone biosynthesis; menaquinol from 1,4-dihydroxy-2-naphthoate: step 2/2. The protein operates within cofactor biosynthesis; ubiquinone biosynthesis. Functionally, methyltransferase required for the conversion of demethylmenaquinol (DMKH2) to menaquinol (MKH2) and the conversion of 2-polyprenyl-6-methoxy-1,4-benzoquinol (DDMQH2) to 2-polyprenyl-3-methyl-6-methoxy-1,4-benzoquinol (DMQH2). The protein is Ubiquinone/menaquinone biosynthesis C-methyltransferase UbiE of Rhizobium leguminosarum bv. trifolii (strain WSM2304).